The chain runs to 81 residues: Photosystem I iron-sulfur center (81 aa).

4Fe-4S ferredoxin-type domains lie at 2–31 (AHSV…MVPR) and 39–68 (IASA…VRVY). 8 residues coordinate [4Fe-4S] cluster: Cys-11, Cys-14, Cys-17, Cys-21, Cys-48, Cys-51, Cys-54, and Cys-58.

In terms of assembly, the eukaryotic PSI reaction center is composed of at least 11 subunits. [4Fe-4S] cluster serves as cofactor.

It is found in the plastid. Its subcellular location is the chloroplast thylakoid membrane. It catalyses the reaction reduced [plastocyanin] + hnu + oxidized [2Fe-2S]-[ferredoxin] = oxidized [plastocyanin] + reduced [2Fe-2S]-[ferredoxin]. Apoprotein for the two 4Fe-4S centers FA and FB of photosystem I (PSI); essential for photochemical activity. FB is the terminal electron acceptor of PSI, donating electrons to ferredoxin. The C-terminus interacts with PsaA/B/D and helps assemble the protein into the PSI complex. Required for binding of PsaD and PsaE to PSI. PSI is a plastocyanin/cytochrome c6-ferredoxin oxidoreductase, converting photonic excitation into a charge separation, which transfers an electron from the donor P700 chlorophyll pair to the spectroscopically characterized acceptors A0, A1, FX, FA and FB in turn. The chain is Photosystem I iron-sulfur center from Antithamnion sp. (Red alga).